The primary structure comprises 118 residues: Holo-[acyl-carrier-protein] synthase (118 aa).

The Mg(2+) site is built by Asp8 and Glu58.

The protein belongs to the P-Pant transferase superfamily. AcpS family. The cofactor is Mg(2+).

Its subcellular location is the cytoplasm. It catalyses the reaction apo-[ACP] + CoA = holo-[ACP] + adenosine 3',5'-bisphosphate + H(+). Transfers the 4'-phosphopantetheine moiety from coenzyme A to a Ser of acyl-carrier-protein. This is Holo-[acyl-carrier-protein] synthase from Lactobacillus helveticus (strain DPC 4571).